The following is a 282-amino-acid chain: Bis(5'-nucleosyl)-tetraphosphatase, symmetrical (282 aa).

Belongs to the Ap4A hydrolase family.

It carries out the reaction P(1),P(4)-bis(5'-adenosyl) tetraphosphate + H2O = 2 ADP + 2 H(+). In terms of biological role, hydrolyzes diadenosine 5',5'''-P1,P4-tetraphosphate to yield ADP. This chain is Bis(5'-nucleosyl)-tetraphosphatase, symmetrical, found in Paraburkholderia phymatum (strain DSM 17167 / CIP 108236 / LMG 21445 / STM815) (Burkholderia phymatum).